The chain runs to 91 residues: M-myrmeciitoxin-Mb3a (91 aa).

The first 21 residues, 1 to 21 (MKLSCLSLALAIILILAIVHS), serve as a signal peptide directing secretion. The propeptide occupies 22-54 (PNMEVKALADPEADAFGEANAFGEADAFAEANA).

As to quaternary structure, homodimer; disulfide-linked. In terms of tissue distribution, expressed by the venom gland and reservoir.

It localises to the secreted. In terms of biological role, causes a significant and dose-dependent histamine release, probably by influencing the signal transduction of mast cells through a non-IgE-mediated pathway. This peptide does not have cytotoxic activities. This is M-myrmeciitoxin-Mb3a from Myrmecia banksi (Jack jumper ant).